A 27-amino-acid chain; its full sequence is Weak neurotoxin E3 (27 aa).

Expressed by the venom gland.

The protein localises to the secreted. Its function is as follows. Binds to muscle nicotinic acetylcholine receptor (nAChR) and inhibit acetylcholine from binding to the receptor, thereby impairing neuromuscular transmission. The sequence is that of Weak neurotoxin E3 from Micrurus pyrrhocryptus (Coral snake).